A 511-amino-acid chain; its full sequence is Maturase K (511 aa).

This sequence belongs to the intron maturase 2 family. MatK subfamily.

It localises to the plastid. The protein localises to the chloroplast. Functionally, usually encoded in the trnK tRNA gene intron. Probably assists in splicing its own and other chloroplast group II introns. The sequence is that of Maturase K from Brachypodium sylvaticum (False brome).